The following is a 353-amino-acid chain: Photosystem II D2 protein (353 aa).

Residue Thr-2 is modified to N-acetylthreonine. Thr-2 carries the post-translational modification Phosphothreonine. The helical transmembrane segment at 41 to 61 threads the bilayer; sequence CAYFALGGWFTGTTFVTSWYT. His-118 contributes to the chlorophyll a binding site. A helical transmembrane segment spans residues 125–141; it reads GFMLRQFELARSVQLRP. Pheophytin a-binding residues include Gln-130 and Asn-143. Residues 153–166 form a helical membrane-spanning segment; that stretch reads VFVSVFLIYPLGQS. A chlorophyll a-binding site is contributed by His-198. Residues 208 to 228 form a helical membrane-spanning segment; it reads AALLCAIHGATVENTLFEDGD. The a plastoquinone site is built by His-215 and Phe-262. His-215 is a binding site for Fe cation. His-269 provides a ligand contact to Fe cation. The helical transmembrane segment at 279–295 threads the bilayer; the sequence is GLWMSAIGVVGLALNLR.

The protein belongs to the reaction center PufL/M/PsbA/D family. In terms of assembly, PSII is composed of 1 copy each of membrane proteins PsbA, PsbB, PsbC, PsbD, PsbE, PsbF, PsbH, PsbI, PsbJ, PsbK, PsbL, PsbM, PsbT, PsbX, PsbY, PsbZ, Psb30/Ycf12, at least 3 peripheral proteins of the oxygen-evolving complex and a large number of cofactors. It forms dimeric complexes. Requires The D1/D2 heterodimer binds P680, chlorophylls that are the primary electron donor of PSII, and subsequent electron acceptors. It shares a non-heme iron and each subunit binds pheophytin, quinone, additional chlorophylls, carotenoids and lipids. There is also a Cl(-1) ion associated with D1 and D2, which is required for oxygen evolution. The PSII complex binds additional chlorophylls, carotenoids and specific lipids. as cofactor.

The protein localises to the plastid. It is found in the chloroplast thylakoid membrane. The enzyme catalyses 2 a plastoquinone + 4 hnu + 2 H2O = 2 a plastoquinol + O2. Photosystem II (PSII) is a light-driven water:plastoquinone oxidoreductase that uses light energy to abstract electrons from H(2)O, generating O(2) and a proton gradient subsequently used for ATP formation. It consists of a core antenna complex that captures photons, and an electron transfer chain that converts photonic excitation into a charge separation. The D1/D2 (PsbA/PsbD) reaction center heterodimer binds P680, the primary electron donor of PSII as well as several subsequent electron acceptors. D2 is needed for assembly of a stable PSII complex. The protein is Photosystem II D2 protein of Cryptomeria japonica (Japanese cedar).